The chain runs to 200 residues: MEQQKALDLSFFEQSTIEVAKGLIGMHLVHELDGVTLIGRITETEAYLGVLDRACHSYGRRRTKRTAILYEEAGRCYTYTMHTHCLLNVVCEQKGQPEAVLIRAIEPISGVKEMERLRGKPHTSREFANGPGKLTKAMGITMADYGRLLTEPPLYFAKGDHTNASIVATKRIGIKGAGPCSHHPWRFIDGNSRAVSAYRP.

This sequence belongs to the DNA glycosylase MPG family.

The chain is Putative 3-methyladenine DNA glycosylase from Shouchella clausii (strain KSM-K16) (Alkalihalobacillus clausii).